The chain runs to 165 residues: Shikimate kinase (165 aa).

An ATP-binding site is contributed by 12–17 (GCGKST). Ser-16 is a Mg(2+) binding site. Substrate-binding residues include Asp-34, Arg-57, and Gly-79. Arg-116 serves as a coordination point for ATP. Arg-133 provides a ligand contact to substrate.

The protein belongs to the shikimate kinase family. Monomer. Mg(2+) serves as cofactor.

It localises to the cytoplasm. It carries out the reaction shikimate + ATP = 3-phosphoshikimate + ADP + H(+). Its pathway is metabolic intermediate biosynthesis; chorismate biosynthesis; chorismate from D-erythrose 4-phosphate and phosphoenolpyruvate: step 5/7. In terms of biological role, catalyzes the specific phosphorylation of the 3-hydroxyl group of shikimic acid using ATP as a cosubstrate. This Clostridium botulinum (strain Alaska E43 / Type E3) protein is Shikimate kinase.